Here is a 567-residue protein sequence, read N- to C-terminus: Proline--tRNA ligase (567 aa).

Belongs to the class-II aminoacyl-tRNA synthetase family. ProS type 1 subfamily. Homodimer.

Its subcellular location is the cytoplasm. It catalyses the reaction tRNA(Pro) + L-proline + ATP = L-prolyl-tRNA(Pro) + AMP + diphosphate. Catalyzes the attachment of proline to tRNA(Pro) in a two-step reaction: proline is first activated by ATP to form Pro-AMP and then transferred to the acceptor end of tRNA(Pro). As ProRS can inadvertently accommodate and process non-cognate amino acids such as alanine and cysteine, to avoid such errors it has two additional distinct editing activities against alanine. One activity is designated as 'pretransfer' editing and involves the tRNA(Pro)-independent hydrolysis of activated Ala-AMP. The other activity is designated 'posttransfer' editing and involves deacylation of mischarged Ala-tRNA(Pro). The misacylated Cys-tRNA(Pro) is not edited by ProRS. The polypeptide is Proline--tRNA ligase (Staphylococcus aureus (strain Mu3 / ATCC 700698)).